We begin with the raw amino-acid sequence, 548 residues long: Protein swallow (548 aa).

3 disordered regions span residues 67–109, 184–206, and 358–428; these read AKTC…GRSS, NCQTHSNSDSNYNSNSNNSSSSF, and FSSV…ELIS. Residues 79-91 are compositionally biased toward acidic residues; the sequence is QEDEDDYDEDVDG. Residues 189 to 205 show a composition bias toward low complexity; the sequence is SNSDSNYNSNSNNSSSS. 2 positions are modified to phosphoserine: Ser362 and Ser368. Over residues 388-402 the composition is skewed to polar residues; the sequence is APNNSETSQPSSNDS. Residues 406 to 420 are compositionally biased toward basic and acidic residues; the sequence is VEAHEEERPSSRRQW. 6 positions are modified to phosphoserine: Ser463, Ser471, Ser475, Ser483, Ser485, and Ser487.

May be a homo- or heterodimer.

It is found in the nucleus. In terms of biological role, has a role in localizing bicoid mRNA at the anterior margin of the oocyte during oogenesis, and a poorly characterized role in nuclear divisions in early embryogenesis. The chain is Protein swallow (swa) from Drosophila melanogaster (Fruit fly).